Consider the following 50-residue polypeptide: Bacterioferritin (50 aa).

The region spanning 1-50 (MKGDPKVIDYLNKALRHELTAINQYWLHYRLLDNWGIKDLAKKWRAESIE) is the Ferritin-like diiron domain. Fe cation is bound at residue E18.

The protein belongs to the bacterioferritin family. In terms of assembly, homooligomer of 24 subunits, arranged as 12 dimers, that are packed together to form an approximately spherical molecule with a central cavity, in which large amounts of iron can be deposited. The cofactor is heme b.

It carries out the reaction 4 Fe(2+) + O2 + 4 H(+) = 4 Fe(3+) + 2 H2O. The enzyme catalyses Fe(2+)(in) = Fe(2+)(out). Its function is as follows. Iron-storage protein, whose ferroxidase center binds Fe(2+), oxidizes it using dioxygen to Fe(3+), and participates in the subsequent Fe(3+) oxide mineral core formation within the central cavity of the BFR protein shell. Functionally, may act as one of the electron carriers in the reverse electron-transport system from cytochrome c-552 to NADP(+). The chain is Bacterioferritin (bfr) from Nitrobacter winogradskyi (Nitrobacter agilis).